Consider the following 271-residue polypeptide: Fatty acid elongase A (271 aa).

The next 7 helical transmembrane spans lie at Ile35 to Phe55, Ala68 to Ile88, Ile102 to Ser122, Ser139 to Leu159, Cys165 to Phe185, His198 to Tyr220, and Thr237 to Val257.

Belongs to the ELO family.

It is found in the membrane. The catalysed reaction is a very-long-chain acyl-CoA + malonyl-CoA + H(+) = a very-long-chain 3-oxoacyl-CoA + CO2 + CoA. Fatty acid elongase with strict substrate specificity for monounsaturated fatty acids, in particular 16:1 (delta-9) to produce the unusual 18:1 (delta-11) fatty acid. The polypeptide is Fatty acid elongase A (eloA) (Dictyostelium discoideum (Social amoeba)).